The sequence spans 199 residues: uncharacterized protein (199 aa).

This is an uncharacterized protein from Shigella flexneri.